We begin with the raw amino-acid sequence, 359 residues long: Peptide chain release factor 1 (359 aa).

Residue Q236 is modified to N5-methylglutamine. The segment at 288–307 is disordered; the sequence is QDEQDAERKSTIGTGDRSER. Residues 293-307 are compositionally biased toward basic and acidic residues; sequence AERKSTIGTGDRSER.

This sequence belongs to the prokaryotic/mitochondrial release factor family. Post-translationally, methylated by PrmC. Methylation increases the termination efficiency of RF1.

Its subcellular location is the cytoplasm. Functionally, peptide chain release factor 1 directs the termination of translation in response to the peptide chain termination codons UAG and UAA. The chain is Peptide chain release factor 1 from Streptococcus sanguinis (strain SK36).